Here is a 256-residue protein sequence, read N- to C-terminus: Small ribosomal subunit protein eS1 (256 aa).

Ala-2 carries the N-acetylalanine; partial modification.

Belongs to the eukaryotic ribosomal protein eS1 family. In terms of assembly, component of the small ribosomal subunit. Mature ribosomes consist of a small (40S) and a large (60S) subunit. The 40S subunit contains about 33 different proteins and 1 molecule of RNA (18S). The 60S subunit contains about 49 different proteins and 3 molecules of RNA (25S, 5.8S and 5S).

It is found in the cytoplasm. This Botryotinia fuckeliana (strain B05.10) (Noble rot fungus) protein is Small ribosomal subunit protein eS1 (rps1).